The primary structure comprises 164 residues: Transcription elongation factor GreA (164 aa).

A coiled-coil region spans residues 50–76 (YHAAREEQGQQEARIRQLQELLNNAKV).

It belongs to the GreA/GreB family.

Functionally, necessary for efficient RNA polymerase transcription elongation past template-encoded arresting sites. The arresting sites in DNA have the property of trapping a certain fraction of elongating RNA polymerases that pass through, resulting in locked ternary complexes. Cleavage of the nascent transcript by cleavage factors such as GreA or GreB allows the resumption of elongation from the new 3'terminus. GreA releases sequences of 2 to 3 nucleotides. In Mycobacteroides abscessus (strain ATCC 19977 / DSM 44196 / CCUG 20993 / CIP 104536 / JCM 13569 / NCTC 13031 / TMC 1543 / L948) (Mycobacterium abscessus), this protein is Transcription elongation factor GreA.